Reading from the N-terminus, the 242-residue chain is Placenta-expressed transcript 1 protein (242 aa).

The signal sequence occupies residues 1–26; the sequence is MAILRSLLLPLGLLLCLWLLCSPASC. Over 27 to 220 the chain is Extracellular; the sequence is TNSTTNCKPF…TTHKSSANRA (194 aa). N-linked (GlcNAc...) asparagine glycans are attached at residues N28, N81, and N106. The tract at residues 162–209 is disordered; that stretch reads VITTPTHKPTPAPPKPTTNPQKTTTNHSIPTTSLPKPTTSLYTSHPKL. Residues 169 to 178 show a composition bias toward pro residues; that stretch reads KPTPAPPKPT. The span at 179–205 shows a compositional bias: low complexity; it reads TNPQKTTTNHSIPTTSLPKPTTSLYTS. Residues 221–241 form a helical membrane-spanning segment; sequence FLCPVREAIQILFIFLIGTLL. A topological domain (cytoplasmic) is located at residue F242.

Post-translationally, N-glycosylated.

Its subcellular location is the membrane. The protein resides in the apical cell membrane. Its function is as follows. Modulates leading keratinocyte migration and cellular adhesion to matrix proteins during a wound-healing response and promotes wound repair. May play a role during trichilemmal differentiation of the hair follicle. The polypeptide is Placenta-expressed transcript 1 protein (PLET1) (Bos taurus (Bovine)).